A 295-amino-acid chain; its full sequence is Glycine--tRNA ligase alpha subunit (295 aa).

This sequence belongs to the class-II aminoacyl-tRNA synthetase family. In terms of assembly, tetramer of two alpha and two beta subunits.

Its subcellular location is the cytoplasm. It carries out the reaction tRNA(Gly) + glycine + ATP = glycyl-tRNA(Gly) + AMP + diphosphate. This chain is Glycine--tRNA ligase alpha subunit, found in Desulforamulus reducens (strain ATCC BAA-1160 / DSM 100696 / MI-1) (Desulfotomaculum reducens).